Reading from the N-terminus, the 661-residue chain is MKLITTLLLCSGLLLTLTQGEEAQEIDCNDEAVFQAVDFSLKQFNPGVKSGNQYMLHRVIEGTKTDGSPTFYSFKYLIKEGNCSAQSGLAWQDCDFKDAEEAATGECTATVGKRENEFFIVTQTCKIAPSKAPILKAYFPCIGCVHAISTDSPDLEPVLKHSIEHFNNNTDHSHLFTLRKVKSAHRQVVAGLNFDITYTIVQTNCSKERFPSLHGDCVALPNGDDGECRGNLFMDINNKIANFSQSCTLYSGDDLVEALPKPCPGCPRDIPVDSPELKEVLGHSIAQLNAENDHPFYYKIDTVKKATSQVVAGTKYVIEFIARETKCSKESNTELAEDCEIKHLGQSLDCNANVYMRPWENKVVPTVKCQALDMTEMARRPPGFSPFRSVTVQETKEGRTVSPPYIAREQEERDAETEQGPTHGHGWLHEKQIKANKNHRGHKHGHDHGHWSPRRHGLGHGHQKPHGLGHGHQLKLDYLRHQREDGDDHTHTVGHGHGHGHGHGHGHGHGHGHGHGHGHGHGHGKHTNKDKNSVKQTTQRTESLASSSEYSTTSTQMQGRTEGPTLTPPRAQPTVTSSGFQDSDFIEDVVATTPPYDTGAHDDLIPDIHVQPDSLSFKLISDFPEATSPKCPGRPWKPASWEDPNTETTEFSDFDLLDALS.

Positions 1–20 (MKLITTLLLCSGLLLTLTQG) are cleaved as a signal peptide. Residues 28–131 (CNDEAVFQAV…TQTCKIAPSK (104 aa)) enclose the Cystatin kininogen-type 1 domain. Cystine bridges form between cysteine 28–cysteine 631, cysteine 83–cysteine 94, cysteine 107–cysteine 125, cysteine 141–cysteine 144, cysteine 205–cysteine 217, cysteine 228–cysteine 247, cysteine 263–cysteine 266, cysteine 327–cysteine 339, and cysteine 350–cysteine 369. A glycan (N-linked (GlcNAc...) asparagine) is linked at asparagine 82. The Cystatin kininogen-type 2 domain maps to 150–253 (TDSPDLEPVL…SQSCTLYSGD (104 aa)). 2 N-linked (GlcNAc...) asparagine glycosylation sites follow: asparagine 168 and asparagine 204. Asparagine 242 carries an N-linked (GlcNAc...) asparagine glycan. In terms of domain architecture, Cystatin kininogen-type 3 spans 272 to 375 (VDSPELKEVL…TVKCQALDMT (104 aa)). Serine 331 is subject to Phosphoserine. 3 disordered regions span residues 405-471 (YIAR…LGHG), 485-583 (DGDD…FQDS), and 626-661 (ATSPKCPGRPWKPASWEDPNTETTEFSDFDLLDALS). Basic residues-rich tracts occupy residues 434 to 471 (KANKNHRGHKHGHDHGHWSPRRHGLGHGHQKPHGLGHG) and 492 to 526 (TVGHGHGHGHGHGHGHGHGHGHGHGHGHGHGHGKH). Low complexity predominate over residues 541 to 555 (TESLASSSEYSTTST). Residues 650–661 (EFSDFDLLDALS) show a composition bias toward acidic residues.

Isoform LMW interacts with CRISP3. In terms of processing, bradykinin is released from kininogen by plasma kallikrein. Phosphorylated by FAM20C in the extracellular medium. Post-translationally, bradykinin is inactivated by ACE, which removes the dipeptide Arg-Phe from its C-terminus. As to expression, plasma.

The protein localises to the secreted. Its subcellular location is the extracellular space. Functionally, kininogens are inhibitors of thiol proteases. HMW-kininogen plays an important role in blood coagulation by helping to position optimally prekallikrein and factor XI next to factor XII; HMW-kininogen inhibits the thrombin- and plasmin-induced aggregation of thrombocytes. LMW-kininogen inhibits the aggregation of thrombocytes. LMW-kininogen is in contrast to HMW-kininogen not involved in blood clotting. The active peptide bradykinin is a potent vasodilatator that is released from HMW-kininogen shows a variety of physiological effects: (A) influence in smooth muscle contraction, (B) induction of hypotension, (C) natriuresis and diuresis, (D) decrease in blood glucose level, (E) it is a mediator of inflammation and causes (E1) increase in vascular permeability, (E2) stimulation of nociceptors (4E3) release of other mediators of inflammation (e.g. prostaglandins), (F) it has a cardioprotective effect (directly via bradykinin action, indirectly via endothelium-derived relaxing factor action). This chain is Kininogen-1 (Kng1), found in Mus musculus (Mouse).